A 214-amino-acid chain; its full sequence is tRNA (guanine-N(7)-)-methyltransferase (214 aa).

S-adenosyl-L-methionine contacts are provided by Glu-43, Glu-68, Asp-95, and Asp-117. Asp-117 is an active-site residue. Substrate contacts are provided by residues Lys-121, Asp-153, and 190-193 (TEYE).

It belongs to the class I-like SAM-binding methyltransferase superfamily. TrmB family.

It carries out the reaction guanosine(46) in tRNA + S-adenosyl-L-methionine = N(7)-methylguanosine(46) in tRNA + S-adenosyl-L-homocysteine. The protein operates within tRNA modification; N(7)-methylguanine-tRNA biosynthesis. Catalyzes the formation of N(7)-methylguanine at position 46 (m7G46) in tRNA. The sequence is that of tRNA (guanine-N(7)-)-methyltransferase from Staphylococcus aureus (strain MSSA476).